A 92-amino-acid chain; its full sequence is C-C motif chemokine 4-like (92 aa).

An N-terminal signal peptide occupies residues 1 to 23 (MKLCVTVLSLLVLVAAFCSLALS). 2 disulfide bridges follow: C34/C58 and C35/C74.

The protein belongs to the intercrine beta (chemokine CC) family. As to quaternary structure, interacts with CCR5. In terms of tissue distribution, detected in B-cells.

It localises to the secreted. Its function is as follows. Chemokine that induces chemotaxis of cells expressing CCR5 or CCR1. Inhibits HIV replication in peripheral blood monocytes that express CCR5. The sequence is that of C-C motif chemokine 4-like (CCL4L1) from Homo sapiens (Human).